The primary structure comprises 270 residues: 3-phenylpropionate-dihydrodiol/cinnamic acid-dihydrodiol dehydrogenase (270 aa).

10–34 (FITGGGSGLGLALVERFIEEGAQVA) lines the NAD(+) pocket. Substrate is bound at residue S143. Y156 acts as the Proton acceptor in catalysis.

The protein belongs to the short-chain dehydrogenases/reductases (SDR) family.

It carries out the reaction 3-(cis-5,6-dihydroxycyclohexa-1,3-dien-1-yl)propanoate + NAD(+) = 3-(2,3-dihydroxyphenyl)propanoate + NADH + H(+). It catalyses the reaction (2E)-3-(cis-5,6-dihydroxycyclohexa-1,3-dien-1-yl)prop-2-enoate + NAD(+) = (2E)-3-(2,3-dihydroxyphenyl)prop-2-enoate + NADH + H(+). Its pathway is aromatic compound metabolism; 3-phenylpropanoate degradation. Functionally, converts 3-phenylpropionate-dihydrodiol (PP-dihydrodiol) and cinnamic acid-dihydrodiol (CI-dihydrodiol) into 3-(2,3-dihydroxylphenyl)propanoic acid (DHPP) and 2,3-dihydroxicinnamic acid (DHCI), respectively. In Escherichia coli O8 (strain IAI1), this protein is 3-phenylpropionate-dihydrodiol/cinnamic acid-dihydrodiol dehydrogenase.